We begin with the raw amino-acid sequence, 318 residues long: Protein FAM228A (318 aa).

The segment at Ser-259 to Asp-297 is disordered.

It belongs to the FAM228 family.

This is Protein FAM228A (FAM228A) from Bos taurus (Bovine).